Here is a 258-residue protein sequence, read N- to C-terminus: Phosphoadenosine 5'-phosphosulfate reductase (258 aa).

The active-site Nucleophile; cysteine thiosulfonate intermediate is Cys244.

The protein belongs to the PAPS reductase family. CysH subfamily.

Its subcellular location is the cytoplasm. The enzyme catalyses [thioredoxin]-disulfide + sulfite + adenosine 3',5'-bisphosphate + 2 H(+) = [thioredoxin]-dithiol + 3'-phosphoadenylyl sulfate. Its pathway is sulfur metabolism; hydrogen sulfide biosynthesis; sulfite from sulfate: step 3/3. In terms of biological role, catalyzes the formation of sulfite from phosphoadenosine 5'-phosphosulfate (PAPS) using thioredoxin as an electron donor. This Vibrio vulnificus (strain YJ016) protein is Phosphoadenosine 5'-phosphosulfate reductase.